A 218-amino-acid chain; its full sequence is Thiopurine S-methyltransferase (218 aa).

W10, L45, E66, and R123 together coordinate S-adenosyl-L-methionine.

It belongs to the class I-like SAM-binding methyltransferase superfamily. TPMT family.

Its subcellular location is the cytoplasm. It carries out the reaction S-adenosyl-L-methionine + a thiopurine = S-adenosyl-L-homocysteine + a thiopurine S-methylether.. The chain is Thiopurine S-methyltransferase from Shewanella putrefaciens (strain CN-32 / ATCC BAA-453).